A 312-amino-acid polypeptide reads, in one-letter code: MGMKRKKISIIGAGFTGATTAFILAQKELGDIVLVDIPQLENPTKGKALDMLESSPVLGFDANIIGTSDYADTADSDVVVITAGIARKPGMSRDDLVTTNQGIMKAVTKEVVKYSPNCFIIVLTNPVDAMTYTVFKESGFPKNRVIGQSGVLDTARFRTFVAQELNLSVKDITGFVLGGHGDDMVPLVRYSYAGGIPLETLIPKERLDAIVERTRKGGGEIVNLLGNGSAYYAPAASLAEMVEAIVKDQRRVLPAIAYLEGEYGYEGIYLGVPTILGGNGIEKVIELELTEEEKAALAKSVESVKNVMKVLQ.

NAD(+)-binding positions include 12–17 and Asp36; that span reads GAGFTG. Positions 87 and 93 each coordinate substrate. NAD(+) is bound by residues Asn100 and 123-125; that span reads LTN. Asn125 is a substrate binding site. Ser149 carries the post-translational modification Phosphoserine. Arg156 lines the substrate pocket. The active-site Proton acceptor is His180.

Belongs to the LDH/MDH superfamily. MDH type 3 family.

The enzyme catalyses (S)-malate + NAD(+) = oxaloacetate + NADH + H(+). In terms of biological role, catalyzes the reversible oxidation of malate to oxaloacetate. The chain is Malate dehydrogenase from Anoxybacillus flavithermus (strain DSM 21510 / WK1).